The following is a 478-amino-acid chain: Adenosylhomocysteinase (478 aa).

Substrate-binding residues include threonine 67, aspartate 144, and glutamate 204. 205–207 (TTT) serves as a coordination point for NAD(+). Lysine 234 and aspartate 238 together coordinate substrate. Residues asparagine 239, 268–273 (GYGDVG), glutamate 291, asparagine 326, 347–349 (IGH), and asparagine 392 each bind NAD(+).

The protein belongs to the adenosylhomocysteinase family. The cofactor is NAD(+).

It localises to the cytoplasm. It carries out the reaction S-adenosyl-L-homocysteine + H2O = L-homocysteine + adenosine. Its pathway is amino-acid biosynthesis; L-homocysteine biosynthesis; L-homocysteine from S-adenosyl-L-homocysteine: step 1/1. Its function is as follows. May play a key role in the regulation of the intracellular concentration of adenosylhomocysteine. The polypeptide is Adenosylhomocysteinase (Nitrosomonas eutropha (strain DSM 101675 / C91 / Nm57)).